Here is a 42-residue protein sequence, read N- to C-terminus: Iota-conotoxin-like R11.1 (42 aa).

4 cysteine pairs are disulfide-bonded: cysteine 5/cysteine 19, cysteine 12/cysteine 22, cysteine 18/cysteine 27, and cysteine 21/cysteine 36.

This sequence belongs to the conotoxin I1 superfamily. Expressed by the venom duct.

It localises to the secreted. Functionally, iota-conotoxins bind to voltage-gated sodium channels (Nav) and act as agonists by shifting the voltage-dependence of activation to more hyperpolarized levels. Produces general excitatory symptoms. The polypeptide is Iota-conotoxin-like R11.1 (Conus radiatus (Rayed cone)).